The chain runs to 154 residues: SsrA-binding protein (154 aa).

The protein belongs to the SmpB family.

It is found in the cytoplasm. Required for rescue of stalled ribosomes mediated by trans-translation. Binds to transfer-messenger RNA (tmRNA), required for stable association of tmRNA with ribosomes. tmRNA and SmpB together mimic tRNA shape, replacing the anticodon stem-loop with SmpB. tmRNA is encoded by the ssrA gene; the 2 termini fold to resemble tRNA(Ala) and it encodes a 'tag peptide', a short internal open reading frame. During trans-translation Ala-aminoacylated tmRNA acts like a tRNA, entering the A-site of stalled ribosomes, displacing the stalled mRNA. The ribosome then switches to translate the ORF on the tmRNA; the nascent peptide is terminated with the 'tag peptide' encoded by the tmRNA and targeted for degradation. The ribosome is freed to recommence translation, which seems to be the essential function of trans-translation. In Staphylococcus aureus (strain USA300), this protein is SsrA-binding protein.